The following is a 205-amino-acid chain: Holliday junction branch migration complex subunit RuvA (205 aa).

The interval 1–64 is domain I; that stretch reads MIGKLKGTID…EDQLKLFGFL (64 aa). The domain II stretch occupies residues 65 to 143; the sequence is SALEREWFRL…AFSGEMAPSI (79 aa). Residues 144–153 are flexible linker; sequence GLKQELGEGV. Residues 153 to 205 form a domain III region; sequence VAAAPVADAVSALTNLGYSRDQAANAVAAALKNGGEGGDSAKLIRLGLKELSR.

It belongs to the RuvA family. Homotetramer. Forms an RuvA(8)-RuvB(12)-Holliday junction (HJ) complex. HJ DNA is sandwiched between 2 RuvA tetramers; dsDNA enters through RuvA and exits via RuvB. An RuvB hexamer assembles on each DNA strand where it exits the tetramer. Each RuvB hexamer is contacted by two RuvA subunits (via domain III) on 2 adjacent RuvB subunits; this complex drives branch migration. In the full resolvosome a probable DNA-RuvA(4)-RuvB(12)-RuvC(2) complex forms which resolves the HJ.

It localises to the cytoplasm. The RuvA-RuvB-RuvC complex processes Holliday junction (HJ) DNA during genetic recombination and DNA repair, while the RuvA-RuvB complex plays an important role in the rescue of blocked DNA replication forks via replication fork reversal (RFR). RuvA specifically binds to HJ cruciform DNA, conferring on it an open structure. The RuvB hexamer acts as an ATP-dependent pump, pulling dsDNA into and through the RuvAB complex. HJ branch migration allows RuvC to scan DNA until it finds its consensus sequence, where it cleaves and resolves the cruciform DNA. This Rhizobium meliloti (strain 1021) (Ensifer meliloti) protein is Holliday junction branch migration complex subunit RuvA.